We begin with the raw amino-acid sequence, 251 residues long: Uridylate kinase (251 aa).

Residue 19-22 (KLSG) coordinates ATP. Gly61 is a binding site for UMP. Gly62 and Arg66 together coordinate ATP. UMP is bound by residues Asp81 and 142-149 (IGNPFFTT). Positions 169, 170, 175, and 178 each coordinate ATP.

It belongs to the UMP kinase family. Homohexamer.

The protein resides in the cytoplasm. The enzyme catalyses UMP + ATP = UDP + ADP. It functions in the pathway pyrimidine metabolism; CTP biosynthesis via de novo pathway; UDP from UMP (UMPK route): step 1/1. Inhibited by UTP. In terms of biological role, catalyzes the reversible phosphorylation of UMP to UDP. The sequence is that of Uridylate kinase from Hyphomonas neptunium (strain ATCC 15444).